A 354-amino-acid polypeptide reads, in one-letter code: Neutral protease 2 homolog MEP3 (354 aa).

An N-terminal signal peptide occupies residues 1–19; it reads MHFTSSLLALVALTTQALA. The propeptide occupies 20–179; it reads FPLNDLPKRD…QSAIPKLEKR (160 aa). Intrachain disulfides connect C186–C256 and C263–C281. H305 serves as a coordination point for Zn(2+). The active site involves E306. The Zn(2+) site is built by H309 and D320.

Belongs to the peptidase M35 family. Requires Zn(2+) as cofactor.

Its subcellular location is the secreted. The catalysed reaction is Preferential cleavage of bonds with hydrophobic residues in P1'. Also 3-Asn-|-Gln-4 and 8-Gly-|-Ser-9 bonds in insulin B chain.. Secreted metalloproteinase that allows assimilation of proteinaceous substrates. Shows high activities on basic nuclear substrates such as histone and protamine. May be involved in virulence. The chain is Neutral protease 2 homolog MEP3 (MEP3) from Coccidioides posadasii (strain C735) (Valley fever fungus).